The sequence spans 304 residues: HPr kinase/phosphorylase (304 aa).

Residues histidine 136 and lysine 157 contribute to the active site. 151–158 provides a ligand contact to ATP; that stretch reads GESGIGKS. Serine 158 is a binding site for Mg(2+). The active-site Proton acceptor; for phosphorylation activity. Proton donor; for dephosphorylation activity is the aspartate 175. Residues 198-207 form an important for the catalytic mechanism of both phosphorylation and dephosphorylation region; the sequence is LEVRGIGIID. Glutamate 199 contributes to the Mg(2+) binding site. Arginine 240 is an active-site residue. Residues 261–266 form an important for the catalytic mechanism of dephosphorylation region; the sequence is PVRPGR.

The protein belongs to the HPrK/P family. In terms of assembly, homohexamer. Mg(2+) is required as a cofactor.

It catalyses the reaction [HPr protein]-L-serine + ATP = [HPr protein]-O-phospho-L-serine + ADP + H(+). The enzyme catalyses [HPr protein]-O-phospho-L-serine + phosphate + H(+) = [HPr protein]-L-serine + diphosphate. Functionally, catalyzes the ATP- as well as the pyrophosphate-dependent phosphorylation of a specific serine residue in HPr, a phosphocarrier protein of the phosphoenolpyruvate-dependent sugar phosphotransferase system (PTS). HprK/P also catalyzes the pyrophosphate-producing, inorganic phosphate-dependent dephosphorylation (phosphorolysis) of seryl-phosphorylated HPr (P-Ser-HPr). The two antagonistic activities of HprK/P are regulated by several intracellular metabolites, which change their concentration in response to the absence or presence of rapidly metabolisable carbon sources (glucose, fructose, etc.) in the growth medium. Therefore, by controlling the phosphorylation state of HPr, HPrK/P is a sensor enzyme that plays a major role in the regulation of carbon metabolism and sugar transport: it mediates carbon catabolite repression (CCR), and regulates PTS-catalyzed carbohydrate uptake and inducer exclusion. This is HPr kinase/phosphorylase from Clostridium botulinum (strain Alaska E43 / Type E3).